The chain runs to 422 residues: 5'-deoxyadenosine deaminase (422 aa).

The Zn(2+) site is built by histidine 57 and histidine 59. Residues glutamate 86 and histidine 178 each coordinate substrate. Histidine 205 is a binding site for Zn(2+). Substrate is bound by residues glutamate 208 and aspartate 294. Residue aspartate 294 coordinates Zn(2+).

This sequence belongs to the metallo-dependent hydrolases superfamily. MTA/SAH deaminase family. Homotetramer. Zn(2+) is required as a cofactor.

The catalysed reaction is 5'-deoxyadenosine + H2O + H(+) = 5'-deoxyinosine + NH4(+). It catalyses the reaction S-adenosyl-L-homocysteine + H2O + H(+) = S-inosyl-L-homocysteine + NH4(+). It carries out the reaction S-methyl-5'-thioadenosine + H2O + H(+) = S-methyl-5'-thioinosine + NH4(+). The enzyme catalyses adenosine + H2O + H(+) = inosine + NH4(+). It participates in amino-acid biosynthesis; S-adenosyl-L-methionine biosynthesis. In terms of biological role, catalyzes the deamination of three SAM-derived enzymatic products, namely 5'-deoxyadenosine, S-adenosyl-L-homocysteine, and 5'-methylthioadenosine, to produce the inosine analogs. Can also deaminate adenosine. The preferred substrate for this enzyme is 5'-deoxyadenosine, but all these substrates are efficiently deaminated. Likely functions in a S-adenosyl-L-methionine (SAM) recycling pathway from S-adenosyl-L-homocysteine (SAH) produced from SAM-dependent methylation reactions. May also be involved in the recycling of 5'-deoxyadenosine, whereupon the 5'-deoxyribose moiety of 5'-deoxyinosine is further metabolized to deoxyhexoses used for the biosynthesis of aromatic amino acids in methanogens. This Methanococcus maripaludis (strain C6 / ATCC BAA-1332) protein is 5'-deoxyadenosine deaminase.